The sequence spans 246 residues: 3-deoxy-manno-octulosonate cytidylyltransferase (246 aa).

Belongs to the KdsB family.

Its subcellular location is the cytoplasm. The catalysed reaction is 3-deoxy-alpha-D-manno-oct-2-ulosonate + CTP = CMP-3-deoxy-beta-D-manno-octulosonate + diphosphate. It functions in the pathway nucleotide-sugar biosynthesis; CMP-3-deoxy-D-manno-octulosonate biosynthesis; CMP-3-deoxy-D-manno-octulosonate from 3-deoxy-D-manno-octulosonate and CTP: step 1/1. The protein operates within bacterial outer membrane biogenesis; lipopolysaccharide biosynthesis. Activates KDO (a required 8-carbon sugar) for incorporation into bacterial lipopolysaccharide in Gram-negative bacteria. The protein is 3-deoxy-manno-octulosonate cytidylyltransferase of Leptospira borgpetersenii serovar Hardjo-bovis (strain JB197).